The following is a 225-amino-acid chain: Suppressor of cytokine signaling 3 (225 aa).

Residues 22-33 form a kinase inhibitory region (KIR) region; it reads LKTFSSKSEYQL. The interval 34-45 is extended SH2 subdomain (ESS); it reads VVNAVRKLQESG. Residues 46–142 enclose the SH2 domain; it reads FYWSAVTGGE…APSFSLPPTE (97 aa). The disordered stretch occupies residues 141 to 160; that stretch reads TEPSFEVQEQPPAQALPGGT. An SOCS box domain is found at 177–224; sequence VLSRPLSSNVATLQHLCRKTVNGHLDSYEKVTQLPGPIREFLDQYDAP.

As to quaternary structure, interacts with multiple activated proteins of the tyrosine kinase signaling pathway including IGF1 receptor, insulin receptor and JAK2. Binding to JAK2 is mediated through the KIR and SH2 domains to a phosphorylated tyrosine residue within the JAK2 JH1 domain. Binds specific activated tyrosine residues of the leptin, EPO, IL12, GSCF and gp130 receptors. Interaction with CSNK1E stabilize SOCS3 protein. Component of the probable ECS(SOCS3) E3 ubiquitin-protein ligase complex which contains CUL5, RNF7/RBX2, Elongin BC complex and SOCS3. Interacts with CUL5, RNF7, ELOB and ELOC. Interacts with FGFR3. Interacts with INSR. Interacts with BCL10; this interaction may interfere with BCL10-binding with PELI2. Interacts with NOD2 (via CARD domain); the interaction promotes NOD2 degradation. Post-translationally, phosphorylated on tyrosine residues after stimulation by the cytokines, IL-2, EPO or IGF1.

Its pathway is protein modification; protein ubiquitination. Functionally, SOCS family proteins form part of a classical negative feedback system that regulates cytokine signal transduction. SOCS3 is involved in negative regulation of cytokines that signal through the JAK/STAT pathway. Inhibits cytokine signal transduction by binding to tyrosine kinase receptors including IL6ST/gp130, LIF, erythropoietin, insulin, IL12, GCSF and leptin receptors. Binding to JAK2 inhibits its kinase activity and regulates IL6 signaling. Suppresses fetal liver erythropoiesis. Regulates onset and maintenance of allergic responses mediated by T-helper type 2 cells. Probable substrate recognition component of a SCF-like ECS (Elongin BC-CUL2/5-SOCS-box protein) E3 ubiquitin-protein ligase complex which mediates the ubiquitination and subsequent proteasomal degradation of target proteins. The protein is Suppressor of cytokine signaling 3 of Rattus norvegicus (Rat).